Reading from the N-terminus, the 61-residue chain is MAHPKRRQSKTRTAKRRTHDKAVAPTLAICPNCGEWHVYHTVCGACGYYRGKLAIEKEAAV.

Basic residues predominate over residues Met-1–His-19. Positions Met-1–Asp-20 are disordered.

This sequence belongs to the bacterial ribosomal protein bL32 family.

This chain is Large ribosomal subunit protein bL32, found in Bacteroides fragilis (strain YCH46).